Here is a 124-residue protein sequence, read N- to C-terminus: Conotoxin Im14.2 (124 aa).

A signal peptide spans 1–20 (MARFLSILLCFAMATGLAAG). Residues 21 to 99 (IRYPDRVLGR…AENPVRDPKK (79 aa)) constitute a propeptide that is removed on maturation.

Post-translationally, contain 2 disulfide bonds. As to expression, expressed by the venom duct.

The protein localises to the secreted. Functionally, probable neurotoxin. The protein is Conotoxin Im14.2 of Conus imperialis (Imperial cone).